Here is a 210-residue protein sequence, read N- to C-terminus: Orotate phosphoribosyltransferase (210 aa).

5-phospho-alpha-D-ribose 1-diphosphate is bound by residues Arg97, Lys101, His103, and Glu123 to Ser131. Residue Ser127 participates in orotate binding.

It belongs to the purine/pyrimidine phosphoribosyltransferase family. PyrE subfamily. As to quaternary structure, homodimer. It depends on Mg(2+) as a cofactor.

The catalysed reaction is orotidine 5'-phosphate + diphosphate = orotate + 5-phospho-alpha-D-ribose 1-diphosphate. It functions in the pathway pyrimidine metabolism; UMP biosynthesis via de novo pathway; UMP from orotate: step 1/2. Catalyzes the transfer of a ribosyl phosphate group from 5-phosphoribose 1-diphosphate to orotate, leading to the formation of orotidine monophosphate (OMP). This Enterococcus faecalis (strain ATCC 700802 / V583) protein is Orotate phosphoribosyltransferase.